The sequence spans 270 residues: Expansin-B10 (270 aa).

A signal peptide spans 1–31 (MAVNVRTMWSSMRAQVAMVVALVFLVRGAWC). A glycan (N-linked (GlcNAc...) asparagine) is linked at Asn-41. The region spanning 70 to 176 (GGGCGYKDVN…RRVKCKYDSK (107 aa)) is the Expansin-like EG45 domain. 3 disulfides stabilise this stretch: Cys-73-Cys-101, Cys-104-Cys-171, and Cys-109-Cys-115. In terms of domain architecture, Expansin-like CBD spans 188 to 269 (NYLALLVKYV…NWKANTAYTA (82 aa)).

This sequence belongs to the expansin family. Expansin B subfamily. In terms of tissue distribution, expressed in pollen.

The protein resides in the secreted. It localises to the cell wall. The protein localises to the membrane. Functionally, may aid fertilization by loosening the cell wall of the stigma and style, thereby facilitating penetration of the pollen tube. Acts selectively on grass cell walls, which are relatively poor in pectins and xyloglucans and rich in glucuronoarabinoxylans and (1-3),(1-4)-beta-D-glucans, when compared with cell walls of other angiosperms, including other monocots. In Zea mays (Maize), this protein is Expansin-B10 (EXPB10).